The chain runs to 1029 residues: DNA repair protein RAD5A (1029 aa).

The segment at 83-104 (SVGANHRVEEENESVNGGGEES) is disordered. The 217-residue stretch at 406–622 (PSTLQMARGG…YSLLRFLRIE (217 aa)) folds into the Helicase ATP-binding domain. 419–426 (DAMGLGKT) lines the ATP pocket. The DEAH box signature appears at 573-576 (DEAH). An RING-type zinc finger spans residues 794–834 (CPICLEALEDAVLTPCAHRLCRECLLASWRNSTSGLCPVCR). The Helicase C-terminal domain maps to 864–1029 (KITALLEELE…RIEELKMLFT (166 aa)).

This sequence belongs to the SNF2/RAD54 helicase family. RAD16 subfamily.

It is found in the nucleus. Functions in error-free postreplication DNA repair or DNA-damage tolerance (DTT) pathway. Required for homologous recombination (HR) induced by DNA double-strand break (DSB) in somatic cells. Required for damage-induced DNA repair, independently of MUS81 and RECQL4A. Plays a role in synthesis-dependent strand annealing (SDSA) but not in single-strand annealing (SSA). Possesses double-stranded DNA-dependent ATPase activity. Is able to regress replication forks with preference for forks with a leading strand gap. Is able to catalyze branch migration of Holliday junctions and is unaffected by protein blockades. In Arabidopsis thaliana (Mouse-ear cress), this protein is DNA repair protein RAD5A.